A 568-amino-acid chain; its full sequence is MPASISRSTYASMFGPTTGDRLRLGDTELVIEVERDLTTYGEEVKFGGGKVIRDGMGQSQRTRAEGAMDTVITNALIVDWTGIYKADVGLRDGRIAKIGKAGNPDTQPGVDIVIGPGTEIIAGEGRILTAGGMDAHIHFICPQQIEDSLHSGITTMLGGGTGPAHGTLATTCTPGPWHIGRMLQAADAFPINLAFAGKGNASLPAGLEEQVRAGASCLKLHEDWGTTPAAIDCCLSVADRMDVQVMIHTDTLNESGFVENTLAAIGGRTIHAFHTEGAGGGHAPDIIKVVGAANVIPSSTNPTMPYTANTVEEHLDMLMVCHHLDRSIPEDVAFAESRIRKETIAAEDILHDMGAFSVISSDSQAMGRVGEVITRTWQTAHKMKVQRGRLAEETGANDNQRVRRYIAKYTINPAIAHGLSRHIGSVEEGKRADLVLWQPAFFGAKPDLVLLGGMIVCAQMGDPNGSIPAQPYYSRPMFGAFGGALHASAVTFVSQAAEEDGVGERLRLQKGTLAVQGTRDIGKADMKLNAHRPSIEVNPETYEVRADGELLTCQPLAELPLAQRYFLY.

The Urease domain occupies 131–568; sequence GGMDAHIHFI…LPLAQRYFLY (438 aa). Ni(2+)-binding residues include H136, H138, and K219. K219 carries the post-translational modification N6-carboxylysine. H221 is a binding site for substrate. The Ni(2+) site is built by H248 and H274. The active-site Proton donor is H322. Ni(2+) is bound at residue D362.

Belongs to the metallo-dependent hydrolases superfamily. Urease alpha subunit family. Heterotrimer of UreA (gamma), UreB (beta) and UreC (alpha) subunits. Three heterotrimers associate to form the active enzyme. Ni cation serves as cofactor. Carboxylation allows a single lysine to coordinate two nickel ions.

Its subcellular location is the cytoplasm. It carries out the reaction urea + 2 H2O + H(+) = hydrogencarbonate + 2 NH4(+). It functions in the pathway nitrogen metabolism; urea degradation; CO(2) and NH(3) from urea (urease route): step 1/1. This Cereibacter sphaeroides (strain ATCC 17023 / DSM 158 / JCM 6121 / CCUG 31486 / LMG 2827 / NBRC 12203 / NCIMB 8253 / ATH 2.4.1.) (Rhodobacter sphaeroides) protein is Urease subunit alpha.